A 490-amino-acid polypeptide reads, in one-letter code: Cytochrome P450 2C28 (490 aa).

Position 127 is a phosphoserine (S127). K249 and K375 each carry N6-acetyllysine. C435 contacts heme.

The protein belongs to the cytochrome P450 family. The cofactor is heme. In terms of tissue distribution, liver.

It is found in the endoplasmic reticulum membrane. The protein resides in the microsome membrane. The enzyme catalyses an organic molecule + reduced [NADPH--hemoprotein reductase] + O2 = an alcohol + oxidized [NADPH--hemoprotein reductase] + H2O + H(+). Its function is as follows. Catalyzes the N-demethylation of aminopyrine and benzphetamine, but does not catalyze the hydroxylation of tolbutamide, testosterone, and progesterone. This chain is Cytochrome P450 2C28 (CYP2C28), found in Mesocricetus auratus (Golden hamster).